The primary structure comprises 529 residues: Peptide chain release factor 3 (529 aa).

Residues 11 to 280 (AKRRTFAIIS…GLVEWAPAPM (270 aa)) form the tr-type G domain. Residues 20–27 (SHPDAGKT), 88–92 (DTPGH), and 142–145 (NKLD) contribute to the GTP site.

The protein belongs to the TRAFAC class translation factor GTPase superfamily. Classic translation factor GTPase family. PrfC subfamily.

The protein localises to the cytoplasm. Its function is as follows. Increases the formation of ribosomal termination complexes and stimulates activities of RF-1 and RF-2. It binds guanine nucleotides and has strong preference for UGA stop codons. It may interact directly with the ribosome. The stimulation of RF-1 and RF-2 is significantly reduced by GTP and GDP, but not by GMP. The polypeptide is Peptide chain release factor 3 (Shigella flexneri).